Consider the following 414-residue polypeptide: S-adenosylmethionine synthase (414 aa).

An ATP-binding site is contributed by His-11. Asp-13 is a binding site for Mg(2+). K(+) is bound at residue Glu-39. L-methionine contacts are provided by Glu-52 and Gln-95. The interval 95-105 is flexible loop; sequence QSPDIAQGVNL. ATP contacts are provided by residues 169–171, 245–246, Asp-254, 260–261, Ala-277, and Lys-281; these read DGK, KF, and RK. Asp-254 provides a ligand contact to L-methionine. Lys-285 contacts L-methionine.

Belongs to the AdoMet synthase family. Homotetramer; dimer of dimers. It depends on Mg(2+) as a cofactor. K(+) is required as a cofactor.

It localises to the cytoplasm. It catalyses the reaction L-methionine + ATP + H2O = S-adenosyl-L-methionine + phosphate + diphosphate. It functions in the pathway amino-acid biosynthesis; S-adenosyl-L-methionine biosynthesis; S-adenosyl-L-methionine from L-methionine: step 1/1. Its function is as follows. Catalyzes the formation of S-adenosylmethionine (AdoMet) from methionine and ATP. The overall synthetic reaction is composed of two sequential steps, AdoMet formation and the subsequent tripolyphosphate hydrolysis which occurs prior to release of AdoMet from the enzyme. The protein is S-adenosylmethionine synthase of Synechococcus sp. (strain JA-3-3Ab) (Cyanobacteria bacterium Yellowstone A-Prime).